The sequence spans 173 residues: Large ribosomal subunit protein uL10 (173 aa).

Belongs to the universal ribosomal protein uL10 family. As to quaternary structure, part of the ribosomal stalk of the 50S ribosomal subunit. The N-terminus interacts with L11 and the large rRNA to form the base of the stalk. The C-terminus forms an elongated spine to which L12 dimers bind in a sequential fashion forming a multimeric L10(L12)X complex.

Forms part of the ribosomal stalk, playing a central role in the interaction of the ribosome with GTP-bound translation factors. The polypeptide is Large ribosomal subunit protein uL10 (Bifidobacterium longum (strain DJO10A)).